A 281-amino-acid polypeptide reads, in one-letter code: NADPH-dependent 7-cyano-7-deazaguanine reductase (281 aa).

Residue 88-90 participates in substrate binding; that stretch reads IES. An NADPH-binding site is contributed by 90–91; the sequence is SK. C189 functions as the Thioimide intermediate in the catalytic mechanism. The active-site Proton donor is the D196. 228 to 229 contributes to the substrate binding site; the sequence is HE. 257–258 is a binding site for NADPH; sequence RG.

This sequence belongs to the GTP cyclohydrolase I family. QueF type 2 subfamily. In terms of assembly, homodimer.

Its subcellular location is the cytoplasm. The catalysed reaction is 7-aminomethyl-7-carbaguanine + 2 NADP(+) = 7-cyano-7-deazaguanine + 2 NADPH + 3 H(+). The protein operates within tRNA modification; tRNA-queuosine biosynthesis. Its function is as follows. Catalyzes the NADPH-dependent reduction of 7-cyano-7-deazaguanine (preQ0) to 7-aminomethyl-7-deazaguanine (preQ1). This chain is NADPH-dependent 7-cyano-7-deazaguanine reductase, found in Proteus mirabilis (strain HI4320).